The primary structure comprises 308 residues: MPIKIPDTLPAFETLVHEGVRVMTETAAIRQDIRPLQIGLLNLMPNKIKTEIQMARLVGASPLQVELSLIRIGGHRAKNTPEEHLLSFYQTWEEVRHRKFDGFIITGAPIELLDYEDVTYWNEMQQIFEWTQTNVHSTLNVCWGAMAAIYHFHGVPKYELKEKAFGVYRHRNLSPSSIYLNGFSDDFQVPVSRWTEVRRADIEKHPELEILMESDEMGVCLAHEKAGNRLYMFNHVEYDSTSLADEYFRDVNSGVPIKLPHDYFPHNDPELAPLNRWRSHAHLFFGNWINEIYQTTPYDPQAIGKLAA.

Cysteine 142 (acyl-thioester intermediate) is an active-site residue. Residues lysine 163 and serine 192 each coordinate substrate. The active-site Proton acceptor is histidine 235. Glutamate 237 is a catalytic residue. Arginine 249 serves as a coordination point for substrate.

It belongs to the MetA family.

It is found in the cytoplasm. It carries out the reaction L-homoserine + acetyl-CoA = O-acetyl-L-homoserine + CoA. It functions in the pathway amino-acid biosynthesis; L-methionine biosynthesis via de novo pathway; O-acetyl-L-homoserine from L-homoserine: step 1/1. Functionally, transfers an acetyl group from acetyl-CoA to L-homoserine, forming acetyl-L-homoserine. This chain is Homoserine O-acetyltransferase, found in Agrobacterium fabrum (strain C58 / ATCC 33970) (Agrobacterium tumefaciens (strain C58)).